A 248-amino-acid chain; its full sequence is Pyridoxine 5'-phosphate synthase (248 aa).

A 3-amino-2-oxopropyl phosphate-binding site is contributed by N7. 9–10 (DH) provides a ligand contact to 1-deoxy-D-xylulose 5-phosphate. R18 serves as a coordination point for 3-amino-2-oxopropyl phosphate. The active-site Proton acceptor is H43. 1-deoxy-D-xylulose 5-phosphate is bound by residues R45 and H50. E70 functions as the Proton acceptor in the catalytic mechanism. T100 provides a ligand contact to 1-deoxy-D-xylulose 5-phosphate. H191 serves as the catalytic Proton donor. 3-amino-2-oxopropyl phosphate contacts are provided by residues G192 and 213–214 (GH).

The protein belongs to the PNP synthase family. As to quaternary structure, homooctamer; tetramer of dimers.

Its subcellular location is the cytoplasm. It carries out the reaction 3-amino-2-oxopropyl phosphate + 1-deoxy-D-xylulose 5-phosphate = pyridoxine 5'-phosphate + phosphate + 2 H2O + H(+). The protein operates within cofactor biosynthesis; pyridoxine 5'-phosphate biosynthesis; pyridoxine 5'-phosphate from D-erythrose 4-phosphate: step 5/5. Functionally, catalyzes the complicated ring closure reaction between the two acyclic compounds 1-deoxy-D-xylulose-5-phosphate (DXP) and 3-amino-2-oxopropyl phosphate (1-amino-acetone-3-phosphate or AAP) to form pyridoxine 5'-phosphate (PNP) and inorganic phosphate. In Bordetella bronchiseptica (strain ATCC BAA-588 / NCTC 13252 / RB50) (Alcaligenes bronchisepticus), this protein is Pyridoxine 5'-phosphate synthase.